Consider the following 157-residue polypeptide: MAAGDFRLCDVVLDDTIGRSTPDVEHERAVAIFDLIEENSFAPIGHAGGPYRLNISLADSKLVFAITTEDGGNVATHILSLTPFRRIVKDYFMICESYYEAIRSATPSRIEAIDMGRRGIHNEGSQTLKDRLTGKIEIDFDTARRLFTLVCVLYWRG.

This sequence belongs to the UPF0262 family.

The chain is UPF0262 protein RHECIAT_CH0000657 from Rhizobium etli (strain CIAT 652).